The chain runs to 68 residues: Large ribosomal subunit protein bL32 (68 aa).

This sequence belongs to the bacterial ribosomal protein bL32 family.

This is Large ribosomal subunit protein bL32 from Cereibacter sphaeroides (strain ATCC 17025 / ATH 2.4.3) (Rhodobacter sphaeroides).